A 336-amino-acid chain; its full sequence is Heme A synthase (336 aa).

8 helical membrane passes run 5–25 (LTRW…VGGI), 92–112 (GRAT…KGII), 117–137 (ILSY…GWYM), 153–173 (LAFH…KLVK), 191–211 (LIFS…GALV), 253–273 (FIHR…IISL), 284–304 (VAFY…ITLL), and 307–327 (VPII…SVVI). His-255 is a heme binding site. His-315 is a heme binding site.

Belongs to the COX15/CtaA family. Type 2 subfamily. Interacts with CtaB. Heme b serves as cofactor.

It localises to the cell membrane. It carries out the reaction Fe(II)-heme o + 2 A + H2O = Fe(II)-heme a + 2 AH2. The protein operates within porphyrin-containing compound metabolism; heme A biosynthesis; heme A from heme O: step 1/1. Its function is as follows. Catalyzes the conversion of heme O to heme A by two successive hydroxylations of the methyl group at C8. The first hydroxylation forms heme I, the second hydroxylation results in an unstable dihydroxymethyl group, which spontaneously dehydrates, resulting in the formyl group of heme A. The chain is Heme A synthase from Rickettsia bellii (strain RML369-C).